The primary structure comprises 353 residues: GTPase Obg (353 aa).

The Obg domain occupies Met-1 to Leu-159. One can recognise an OBG-type G domain in the interval Ala-160–Thr-334. GTP-binding positions include Gly-166–Ser-173, Phe-191–His-195, Asp-213–Gly-216, Asn-284–Asp-287, and Ser-315–Ala-317. Residues Ser-173 and Thr-193 each contribute to the Mg(2+) site.

The protein belongs to the TRAFAC class OBG-HflX-like GTPase superfamily. OBG GTPase family. In terms of assembly, monomer. Mg(2+) serves as cofactor.

The protein resides in the cytoplasm. An essential GTPase which binds GTP, GDP and possibly (p)ppGpp with moderate affinity, with high nucleotide exchange rates and a fairly low GTP hydrolysis rate. Plays a role in control of the cell cycle, stress response, ribosome biogenesis and in those bacteria that undergo differentiation, in morphogenesis control. This chain is GTPase Obg, found in Dichelobacter nodosus (strain VCS1703A).